We begin with the raw amino-acid sequence, 361 residues long: DNA polymerase IV 3 (361 aa).

A UmuC domain is found at 12–192; it reads IIHVDMDAFY…LPVNKFHGVG (181 aa). Mg(2+) is bound by residues Asp-16 and Asp-110. Residue Glu-111 is part of the active site.

The protein belongs to the DNA polymerase type-Y family. As to quaternary structure, monomer. Mg(2+) serves as cofactor.

It is found in the cytoplasm. The enzyme catalyses DNA(n) + a 2'-deoxyribonucleoside 5'-triphosphate = DNA(n+1) + diphosphate. Functionally, poorly processive, error-prone DNA polymerase involved in untargeted mutagenesis. Copies undamaged DNA at stalled replication forks, which arise in vivo from mismatched or misaligned primer ends. These misaligned primers can be extended by PolIV. Exhibits no 3'-5' exonuclease (proofreading) activity. May be involved in translesional synthesis, in conjunction with the beta clamp from PolIII. The sequence is that of DNA polymerase IV 3 (dinB3) from Mesorhizobium japonicum (strain LMG 29417 / CECT 9101 / MAFF 303099) (Mesorhizobium loti (strain MAFF 303099)).